The chain runs to 458 residues: ATP synthase subunit beta (458 aa).

ATP is bound at residue 148-155 (GGAGVGKT).

Belongs to the ATPase alpha/beta chains family. F-type ATPases have 2 components, CF(1) - the catalytic core - and CF(0) - the membrane proton channel. CF(1) has five subunits: alpha(3), beta(3), gamma(1), delta(1), epsilon(1). CF(0) has three main subunits: a(1), b(2) and c(9-12). The alpha and beta chains form an alternating ring which encloses part of the gamma chain. CF(1) is attached to CF(0) by a central stalk formed by the gamma and epsilon chains, while a peripheral stalk is formed by the delta and b chains.

It localises to the cell inner membrane. It catalyses the reaction ATP + H2O + 4 H(+)(in) = ADP + phosphate + 5 H(+)(out). Produces ATP from ADP in the presence of a proton gradient across the membrane. The catalytic sites are hosted primarily by the beta subunits. This chain is ATP synthase subunit beta, found in Alkalilimnicola ehrlichii (strain ATCC BAA-1101 / DSM 17681 / MLHE-1).